The primary structure comprises 170 residues: Urease accessory protein UreE (170 aa).

This sequence belongs to the UreE family.

Its subcellular location is the cytoplasm. Its function is as follows. Involved in urease metallocenter assembly. Binds nickel. Probably functions as a nickel donor during metallocenter assembly. The sequence is that of Urease accessory protein UreE from Helicobacter pylori (strain Shi470).